Here is a 163-residue protein sequence, read N- to C-terminus: 16S rRNA aminocarboxypropyltransferase (163 aa).

Threonine 18, isoleucine 66, leucine 87, and serine 106 together coordinate S-adenosyl-L-methionine.

This sequence belongs to the TDD superfamily. TSR3 family.

The protein localises to the cytoplasm. It catalyses the reaction an N(1)-methylpseudouridine in rRNA + S-adenosyl-L-methionine = N(1)-methyl-N(3)-[(3S)-3-amino-3-carboxypropyl]pseudouridine in rRNA + S-methyl-5'-thioadenosine + H(+). In terms of biological role, aminocarboxypropyltransferase that catalyzes the aminocarboxypropyl transfer on pseudouridine corresponding to position 914 in M.jannaschii 16S rRNA. It constitutes the last step in biosynthesis of the hypermodified N1-methyl-N3-(3-amino-3-carboxypropyl) pseudouridine (m1acp3-Psi). The sequence is that of 16S rRNA aminocarboxypropyltransferase from Thermoplasma acidophilum (strain ATCC 25905 / DSM 1728 / JCM 9062 / NBRC 15155 / AMRC-C165).